A 100-amino-acid chain; its full sequence is uncharacterized protein (100 aa).

The disordered stretch occupies residues 40-100; the sequence is GDQMARKATS…DPTKNKSGRG (61 aa).

This is an uncharacterized protein from Mycobacterium tuberculosis (strain ATCC 25618 / H37Rv).